The following is a 105-amino-acid chain: Type VII secretion system extracellular protein D (105 aa).

In terms of assembly, forms heterodimers with EsxB.

It localises to the secreted. The sequence is that of Type VII secretion system extracellular protein D from Staphylococcus aureus (strain USA300).